The sequence spans 110 residues: UPF0102 protein HH_1751 (110 aa).

This sequence belongs to the UPF0102 family.

The chain is UPF0102 protein HH_1751 from Helicobacter hepaticus (strain ATCC 51449 / 3B1).